Reading from the N-terminus, the 535-residue chain is UDP-glucuronosyltransferase 1A1 (535 aa).

Residues methionine 1–alanine 29 form the signal peptide. N-linked (GlcNAc...) asparagine glycosylation is found at asparagine 89, asparagine 297, and asparagine 435. The helical transmembrane segment at valine 493 to phenylalanine 509 threads the bilayer.

It belongs to the UDP-glycosyltransferase family. In terms of assembly, homodimers. Homooligomer. Interacts with UGT1A3, UGT1A4, UGT1A6, UGT1A7, UGT1A8, UGT1A9 and UGT1A10 to form heterodimers. As to expression, highly expressed in liver and at lower levels in colon, kidney, stomach and intestine.

It is found in the endoplasmic reticulum membrane. The catalysed reaction is glucuronate acceptor + UDP-alpha-D-glucuronate = acceptor beta-D-glucuronoside + UDP + H(+). It carries out the reaction 17beta-estradiol + UDP-alpha-D-glucuronate = 17beta-estradiol 3-O-(beta-D-glucuronate) + UDP + H(+). It catalyses the reaction 2-hydroxyestrone + UDP-alpha-D-glucuronate = 2-hydroxyestrone 3-O-(beta-D-glucuronate) + UDP + H(+). The enzyme catalyses 2-hydroxy-17beta-estradiol + UDP-alpha-D-glucuronate = 2-hydroxy-17beta-estradiol 3-O-(beta-D-glucuronate) + UDP + H(+). The catalysed reaction is 2-methoxy-17beta-estradiol + UDP-alpha-D-glucuronate = 2-methoxy-17beta-estradiol 3-O-(beta-D-glucuronate) + UDP + H(+). It carries out the reaction 17alpha-estradiol + UDP-alpha-D-glucuronate = 17alpha-estradiol 3-O-(beta-D-glucuronate) + UDP + H(+). It catalyses the reaction 16beta,17beta-estriol + UDP-alpha-D-glucuronate = 16beta,17beta-estriol 16-O-(beta-D-glucuronate) + UDP + H(+). The enzyme catalyses losartan + UDP-alpha-D-glucuronate = losartan-2-N-beta-D-glucuronide + UDP. The catalysed reaction is prunetin + UDP-alpha-D-glucuronate = prunetin-4'-O-beta-D-glucuronide + UDP. It carries out the reaction SN-38 + UDP-alpha-D-glucuronate = SN-38 O-beta-D-glucuronide + UDP + H(+). It catalyses the reaction (4Z,15Z)-bilirubin IXalpha + UDP-alpha-D-glucuronate = (4Z,15Z)-bilirubin IXalpha C12-beta-D-glucuronoside + UDP. The enzyme catalyses (4Z,15Z)-bilirubin IXalpha + UDP-alpha-D-glucuronate = (4Z,15Z)-bilirubin IXalpha C8-beta-D-glucuronoside + UDP. The catalysed reaction is (4Z,15Z)-bilirubin IXalpha C8-beta-D-glucuronoside + UDP-alpha-D-glucuronate = (4Z,15Z)-bilirubin IXalpha C8,C12-beta-D-bisglucuronoside + UDP. It carries out the reaction (4Z,15Z)-bilirubin IXalpha C12-beta-D-glucuronoside + UDP-alpha-D-glucuronate = (4Z,15Z)-bilirubin IXalpha C8,C12-beta-D-bisglucuronoside + UDP. It catalyses the reaction 8-iso-prostaglandin F2alpha + UDP-alpha-D-glucuronate = 8-iso-prostaglandin F2alpha-glucuronide + UDP + H(+). The enzyme catalyses (5Z,8Z,11Z,14Z)-eicosatetraenoate + UDP-alpha-D-glucuronate = O-[(5Z),(8Z),(11Z),(14Z)-eicosatetraenoyl]-beta-D-glucuronate + UDP. The catalysed reaction is 15-hydroxy-(5Z,8Z,11Z,13E)-eicosatetraenoate + UDP-alpha-D-glucuronate = 15-O-(beta-D-glucuronosyl)-(5Z,8Z,11Z,14Z)-eicosatetraenoate + UDP + H(+). It carries out the reaction 20-hydroxy-(5Z,8Z,11Z,14Z)-eicosatetraenoate + UDP-alpha-D-glucuronate = 20-O-(beta-D-glucuronosyl)-(5Z,8Z,11Z,14Z)-eicosatetraenoate + UDP + H(+). It catalyses the reaction prostaglandin B1 + UDP-alpha-D-glucuronate = 15-O-(beta-D-glucuronosyl)-prostaglandin B1 + UDP + H(+). The enzyme catalyses (E)-ferulate + UDP-alpha-D-glucuronate = (E)-4-O-(beta-D-glucuronosyl)-ferulate + UDP + H(+). The catalysed reaction is (E)-ferulate + UDP-alpha-D-glucuronate = (E)-ferulic acid beta-D-glucuronate ester + UDP. Functionally, UDP-glucuronosyltransferase (UGT) that catalyzes phase II biotransformation reactions in which lipophilic substrates are conjugated with glucuronic acid to increase the metabolite's water solubility, thereby facilitating excretion into either the urine or bile. Essential for the elimination and detoxification of drugs, xenobiotics and endogenous compounds. Catalyzes the glucuronidation of endogenous estrogen hormones such as estradiol, estrone and estriol. Involved in the glucuronidation of bilirubin, a degradation product occurring in the normal catabolic pathway that breaks down heme in vertebrates. Involved in the glucuronidation of arachidonic acid (AA) and AA-derived eicosanoids including 15-HETE, 20-HETE, PGB1 and F2-isoprostane (8-iso-PGF2alpha). Involved in the glucuronidation of the phytochemical ferulic acid at the phenolic or the carboxylic acid group. Also catalyzes the glucuronidation the isoflavones genistein, daidzein, glycitein, formononetin, biochanin A and prunetin, which are phytoestrogens with anticancer and cardiovascular properties. Involved in the glucuronidation of the AGTR1 angiotensin receptor antagonist losartan, a drug which can inhibit the effect of angiotensin II. Involved in the biotransformation of 7-ethyl-10-hydroxycamptothecin (SN-38), the pharmacologically active metabolite of the anticancer drug irinotecan. The polypeptide is UDP-glucuronosyltransferase 1A1 (Mus musculus (Mouse)).